A 412-amino-acid polypeptide reads, in one-letter code: Heat stress transcription factor A-3 (412 aa).

Residues 53–147 (IPPFLSKTFD…LLKNIHRRRS (95 aa)) mediate DNA binding. The tract at residues 144–170 (RRRSPQSNQTCCSSTSQSQGSPTEVGG) is disordered. Low complexity predominate over residues 148-166 (PQSNQTCCSSTSQSQGSPT). The interval 159 to 225 (SQSQGSPTEV…QLLSFLAKLF (67 aa)) is hydrophobic repeat HR-A/B. Positions 166–224 (TEVGGEIEKLRKERRALMEEMVELQQQSRGTARHVDTVNQRLKAAEQRQKQLLSFLAKL) form a coiled coil. The Bipartite nuclear localization signal signature appears at 238 to 254 (KGKEKGGALGLEKARKK). An AHA1 motif is present at residues 277–286 (DDWERLLMYD). The AHA2 motif lies at 381-390 (DVCWEQFAAG).

The protein belongs to the HSF family. Class A subfamily. In terms of assembly, homotrimer. In terms of processing, exhibits temperature-dependent phosphorylation.

Its subcellular location is the nucleus. Transcriptional activator that specifically binds DNA sequence 5'-AGAAnnTTCT-3' known as heat shock promoter elements (HSE). Involved in heat stress response. Activated by DREB2A under heat stress. In Arabidopsis thaliana (Mouse-ear cress), this protein is Heat stress transcription factor A-3 (HSFA3).